The sequence spans 598 residues: Serine hydroxymethyltransferase 7 (598 aa).

The segment at Gln-57 to Asp-85 is disordered. The segment covering Gln-61–Asp-85 has biased composition (basic and acidic residues). Position 370 is an N6-(pyridoxal phosphate)lysine (Lys-370).

This sequence belongs to the SHMT family. As to quaternary structure, homotetramer. The cofactor is pyridoxal 5'-phosphate.

The protein resides in the cytoplasm. It carries out the reaction (6R)-5,10-methylene-5,6,7,8-tetrahydrofolate + glycine + H2O = (6S)-5,6,7,8-tetrahydrofolate + L-serine. The protein operates within one-carbon metabolism; tetrahydrofolate interconversion. In terms of biological role, catalyzes the interconversion of serine and glycine. In Arabidopsis thaliana (Mouse-ear cress), this protein is Serine hydroxymethyltransferase 7 (SHM7).